The primary structure comprises 119 residues: Protein RALF-like 22 (119 aa).

The first 23 residues, 1–23 (MTNTRAIYAVIAILAIVISAVES), serve as a signal peptide directing secretion. Residues 24 to 70 (TGDFGDSLDFVRAGSSSLFSGCTGSIAECIAEEEEMEFDSDISRRIL) constitute a propeptide, removed in mature form. Cystine bridges form between Cys-88/Cys-98 and Cys-111/Cys-117.

Belongs to the plant rapid alkalinization factor (RALF) family. Proteolytically cleaved, probably by S1P, a subtilisin-like serine protease (subtilase).

The protein resides in the secreted. In terms of biological role, cell signaling peptide that may regulate plant stress, growth, and development. Mediates a rapid alkalinization of extracellular space by mediating a transient increase in the cytoplasmic Ca(2+) concentration leading to a calcium-dependent signaling events through a cell surface receptor and a concomitant activation of some intracellular mitogen-activated protein kinases. This is Protein RALF-like 22 (RALFL22) from Arabidopsis thaliana (Mouse-ear cress).